The chain runs to 443 residues: Xaa-Pro dipeptidase (443 aa).

Positions 244, 255, 339, 384, and 423 each coordinate Mn(2+).

This sequence belongs to the peptidase M24B family. Bacterial-type prolidase subfamily. It depends on Mn(2+) as a cofactor.

It catalyses the reaction Xaa-L-Pro dipeptide + H2O = an L-alpha-amino acid + L-proline. In terms of biological role, splits dipeptides with a prolyl residue in the C-terminal position. The polypeptide is Xaa-Pro dipeptidase (Pseudoalteromonas atlantica (strain T6c / ATCC BAA-1087)).